The following is a 121-amino-acid chain: Large ribosomal subunit protein uL22 (121 aa).

Belongs to the universal ribosomal protein uL22 family. Part of the 50S ribosomal subunit.

In terms of biological role, this protein binds specifically to 23S rRNA; its binding is stimulated by other ribosomal proteins, e.g. L4, L17, and L20. It is important during the early stages of 50S assembly. It makes multiple contacts with different domains of the 23S rRNA in the assembled 50S subunit and ribosome. The globular domain of the protein is located near the polypeptide exit tunnel on the outside of the subunit, while an extended beta-hairpin is found that lines the wall of the exit tunnel in the center of the 70S ribosome. The chain is Large ribosomal subunit protein uL22 from Parasynechococcus marenigrum (strain WH8102).